Reading from the N-terminus, the 303-residue chain is Protein translocase subunit SecF (303 aa).

Helical transmembrane passes span 28-48 (SIILSLISFIWIGMYKFNFGI), 140-160 (IEAGTMAMLFSFAAIMIYIWV), 164-184 (WYFGLGILIALVHDVILALGF), 194-214 (LSTIAAVLTIIGYSVNDSVVI), 246-266 (ILTVVTTLLANLALVLFGGEA), and 272-292 (VLVFFGIIAGTYSSIFISAPI).

Belongs to the SecD/SecF family. SecF subfamily. Forms a complex with SecD. Part of the essential Sec protein translocation apparatus which comprises SecA, SecYEG and auxiliary proteins SecDF-YajC and YidC.

It is found in the cell inner membrane. In terms of biological role, part of the Sec protein translocase complex. Interacts with the SecYEG preprotein conducting channel. SecDF uses the proton motive force (PMF) to complete protein translocation after the ATP-dependent function of SecA. This chain is Protein translocase subunit SecF, found in Rickettsia bellii (strain OSU 85-389).